The chain runs to 208 residues: Ribosomal RNA large subunit methyltransferase E (208 aa).

The S-adenosyl-L-methionine site is built by Gly-63, Trp-65, Asp-83, Asp-99, and Asp-124. Lys-164 functions as the Proton acceptor in the catalytic mechanism.

This sequence belongs to the class I-like SAM-binding methyltransferase superfamily. RNA methyltransferase RlmE family.

It localises to the cytoplasm. The catalysed reaction is uridine(2552) in 23S rRNA + S-adenosyl-L-methionine = 2'-O-methyluridine(2552) in 23S rRNA + S-adenosyl-L-homocysteine + H(+). Specifically methylates the uridine in position 2552 of 23S rRNA at the 2'-O position of the ribose in the fully assembled 50S ribosomal subunit. In Enterobacter sp. (strain 638), this protein is Ribosomal RNA large subunit methyltransferase E.